Here is a 437-residue protein sequence, read N- to C-terminus: Adenylosuccinate synthetase, organellar chromatophore (437 aa).

GTP is bound by residues 12 to 18 (GDEGKGK) and 40 to 42 (GHT). Catalysis depends on D13, which acts as the Proton acceptor. Residues D13 and G40 each coordinate Mg(2+). IMP is bound by residues 13-16 (DEGK), 38-41 (NAGH), T128, R142, Q223, T238, and R302. Catalysis depends on H41, which acts as the Proton donor. 298-304 (TTTGRRR) contacts substrate. GTP contacts are provided by residues R304 and 330 to 332 (KLD).

Belongs to the adenylosuccinate synthetase family. As to quaternary structure, homodimer. The cofactor is Mg(2+).

Its subcellular location is the plastid. It localises to the organellar chromatophore. It catalyses the reaction IMP + L-aspartate + GTP = N(6)-(1,2-dicarboxyethyl)-AMP + GDP + phosphate + 2 H(+). Its pathway is purine metabolism; AMP biosynthesis via de novo pathway; AMP from IMP: step 1/2. Functionally, plays an important role in the de novo pathway and in the salvage pathway of purine nucleotide biosynthesis. Catalyzes the first committed step in the biosynthesis of AMP from IMP. This chain is Adenylosuccinate synthetase, organellar chromatophore, found in Paulinella chromatophora.